Consider the following 305-residue polypeptide: MEDGELIKYFKSQMKGDPNMASAVAAIQTLLEFLKRDKGETIQGLRAHLTKAIETLCAVDSSVAVSSGGELFLRFISLTSLEYSDYSKCKKIMIERGELFLSRISLSRTKIASLCHAFIKDGARILTHAYSRVVLRVLEEAVAAKKRFSVYITESQPDLSGKKMAKALCHLNVPVTVVLDAAVGYIMEKVDLVIVGAEGVVENGGIINKIGTNQMAVCAKAQNKPFYVVAESFKFVRLFPLNQQDVPDKFKYKADTLKSVQAGQDLKEEHPWVDYTSPSLITLLFTDLGVLTPSAVSDELIKLYL.

Residue Lys35 is modified to N6-acetyllysine.

This sequence belongs to the eIF-2B alpha/beta/delta subunits family. In terms of assembly, component of the translation initiation factor 2B (eIF2B) complex which is a heterodecamer of two sets of five different subunits: alpha, beta, gamma, delta and epsilon. Subunits alpha, beta and delta comprise a regulatory subcomplex and subunits epsilon and gamma comprise a catalytic subcomplex. Within the complex, the hexameric regulatory complex resides at the center, with the two heterodimeric catalytic subcomplexes bound on opposite sides.

The protein resides in the cytoplasm. It is found in the cytosol. With respect to regulation, activated by the chemical integrated stress response (ISR) inhibitor ISRIB which stimulates guanine nucleotide exchange factor activity for both phosphorylated and unphosphorylated eIF2. Acts as a component of the translation initiation factor 2B (eIF2B) complex, which catalyzes the exchange of GDP for GTP on eukaryotic initiation factor 2 (eIF2) gamma subunit. Its guanine nucleotide exchange factor activity is repressed when bound to eIF2 complex phosphorylated on the alpha subunit, thereby limiting the amount of methionyl-initiator methionine tRNA available to the ribosome and consequently global translation is repressed. This chain is Translation initiation factor eIF2B subunit alpha (Eif2b1), found in Rattus norvegicus (Rat).